A 921-amino-acid chain; its full sequence is MEYKNTLLMPKTEFPMRGNLPKREPAMQEKWAEMNIYEKVQEHTKGRPLFVLHDGPPYANGDIHMGHALNKVLKDFIVRYKSMTGFCAPYVPGWDTHGLPIEQALTNKGVKRKEMTVAEFRKLCAEYAYEQVERQREQFKRLGVRADWDNPYITLEPAYEAQQIKVFGDMAKKGYIYKGQKPVYWSPTSESALAEAEIEYQDKKSASIYVAFPVKDGKNVLEGDEKYIIWTTTPWTLPANLGISVHPELEYAIVKVNDEKYIIASELFETVAKTLEWENAEVVKTVKGSELEYTVAKHPFYDRDSLVMLGDHVTTDAGTGCVHTAPGHGEDDFIVGKKYGLEVLCPVDDKGVLTEEAPGFEGLFYDKANKPITEKLEEVGALLKLTFITHSYPHDWRTKKPIIFRATAQWFASIEAFRKELLEAVAETKWVPAWGETRLHNMVRDRGDWCISRQRAWGVPIPVFYAENGDPIITDETINHVADLFREHGSNVWFEREAKDLLPEGFTHQGSPNGEFRKETDIMDVWFDSGSSHQAVLEERDDLQRPADLYLEGSDQYRGWFNSSLSTAVAVTGKAPYKGVLSHGFVLDGEGRKMSKSIGNIVVPKKIMDQLGGDILRLWVSSVDYQSDVRISDDILKQVAEVYRKIRNTFRFLLGNLDDFKPSENTVAVAELREVDRYMLVKLNDLITKVKEAYETYDFAAVYHAIHNFCTIDLSSFYLDFAKDILYIEGANHEDRRAIQTVLYDVLVALTKLVTPILPHTADEVWPYIPGVTEESVQLTDMPEAVQLDGAEALKTKWDAFMTLRDDVLKALEVARNEKVIGKSLNASITLYPTAEMKAMLESINEDLKQLFIVSEYKLGGMMEEAPADAPKYEHTAVVVAQATGETCERCWVVSETIGKDAEHETLCERCATVVKENYVK.

Positions 57-67 match the 'HIGH' region motif; the sequence is PYANGDIHMGH. E552 contributes to the L-isoleucyl-5'-AMP binding site. The 'KMSKS' region motif lies at 593–597; sequence KMSKS. K596 is a binding site for ATP. Residues C888, C891, C908, and C911 each contribute to the Zn(2+) site.

The protein belongs to the class-I aminoacyl-tRNA synthetase family. IleS type 1 subfamily. In terms of assembly, monomer. Requires Zn(2+) as cofactor.

It localises to the cytoplasm. The enzyme catalyses tRNA(Ile) + L-isoleucine + ATP = L-isoleucyl-tRNA(Ile) + AMP + diphosphate. Its function is as follows. Catalyzes the attachment of isoleucine to tRNA(Ile). As IleRS can inadvertently accommodate and process structurally similar amino acids such as valine, to avoid such errors it has two additional distinct tRNA(Ile)-dependent editing activities. One activity is designated as 'pretransfer' editing and involves the hydrolysis of activated Val-AMP. The other activity is designated 'posttransfer' editing and involves deacylation of mischarged Val-tRNA(Ile). In Bacillus cereus (strain ZK / E33L), this protein is Isoleucine--tRNA ligase 1.